The sequence spans 648 residues: DNA gyrase subunit B (648 aa).

The 115-residue stretch at 427-541 (TELFIVEGDS…AGYVYIAQPP (115 aa)) folds into the Toprim domain. Positions 433, 506, and 508 each coordinate Mg(2+).

Belongs to the type II topoisomerase GyrB family. Heterotetramer, composed of two GyrA and two GyrB chains. In the heterotetramer, GyrA contains the active site tyrosine that forms a transient covalent intermediate with DNA, while GyrB binds cofactors and catalyzes ATP hydrolysis. The cofactor is Mg(2+). Mn(2+) serves as cofactor. Ca(2+) is required as a cofactor.

It is found in the cytoplasm. It catalyses the reaction ATP-dependent breakage, passage and rejoining of double-stranded DNA.. Functionally, a type II topoisomerase that negatively supercoils closed circular double-stranded (ds) DNA in an ATP-dependent manner to modulate DNA topology and maintain chromosomes in an underwound state. Negative supercoiling favors strand separation, and DNA replication, transcription, recombination and repair, all of which involve strand separation. Also able to catalyze the interconversion of other topological isomers of dsDNA rings, including catenanes and knotted rings. Type II topoisomerases break and join 2 DNA strands simultaneously in an ATP-dependent manner. The chain is DNA gyrase subunit B from Streptococcus pneumoniae serotype 4 (strain ATCC BAA-334 / TIGR4).